We begin with the raw amino-acid sequence, 76 residues long: Precursor of CEP7 (76 aa).

Positions 1 to 27 (MAKCTLTSLILLLIVLVLIQESHIVEG) are cleaved as a signal peptide. A propeptide spanning residues 28-61 (RPLKSSRISNVSKKFAAGNSNLSSKLTTEDHSLD) is cleaved from the precursor. 2 N-linked (GlcNAc...) asparagine glycosylation sites follow: N37 and N48. Residues 49–76 (LSSKLTTEDHSLDAFRPTNPGNSPGIGH) are disordered. Hydroxyproline is present on residues P65, P68, and P72.

Belongs to the C-terminally encoded plant signaling peptide (CEP) family. In terms of assembly, interacts with CEP receptors (e.g. CEPR1 and CEPR2). In terms of processing, the mature small signaling peptide is generated by proteolytic processing of the longer precursor.

The protein resides in the secreted. It localises to the extracellular space. It is found in the apoplast. In terms of biological role, extracellular signaling peptide that may regulate primary root growth rate and systemic nitrogen (N)-demand signaling. Mediates up-regulation of genes involved in N uptake and assimilation pathways. The chain is Precursor of CEP7 from Arabidopsis thaliana (Mouse-ear cress).